A 126-amino-acid polypeptide reads, in one-letter code: Fluoride-specific ion channel FluC (126 aa).

The next 4 helical transmembrane spans lie at 4 to 24, 35 to 55, 71 to 91, and 104 to 124; these read FMLLGFIAFGGAFGACARYLI, GFPYGTLTVNIVGSLIMGVLM, IIGLGFLGALTTFSTFSMDNV, and LNILLNVTLSITACFIGFQLM. 2 residues coordinate Na(+): glycine 78 and threonine 81.

The protein belongs to the fluoride channel Fluc/FEX (TC 1.A.43) family.

It is found in the cell inner membrane. It catalyses the reaction fluoride(in) = fluoride(out). Its activity is regulated as follows. Na(+) is not transported, but it plays an essential structural role and its presence is essential for fluoride channel function. Fluoride-specific ion channel. Important for reducing fluoride concentration in the cell, thus reducing its toxicity. The sequence is that of Fluoride-specific ion channel FluC from Aliivibrio salmonicida (strain LFI1238) (Vibrio salmonicida (strain LFI1238)).